A 651-amino-acid polypeptide reads, in one-letter code: Acetyl-coenzyme A synthetase (651 aa).

Residues Arg-189–Lys-192, Thr-311, and Asn-335 contribute to the CoA site. ATP is bound by residues Gly-387–Pro-389, Asp-411–Thr-416, Asp-500, and Arg-515. CoA is bound at residue Ser-523. Arg-526 is a binding site for ATP. Mg(2+)-binding residues include Val-537, His-539, and Val-542. Arg-586 serves as a coordination point for CoA. Position 611 is an N6-acetyllysine (Lys-611).

This sequence belongs to the ATP-dependent AMP-binding enzyme family. Mg(2+) serves as cofactor. Acetylated. Deacetylation by the SIR2-homolog deacetylase activates the enzyme.

The enzyme catalyses acetate + ATP + CoA = acetyl-CoA + AMP + diphosphate. Functionally, catalyzes the conversion of acetate into acetyl-CoA (AcCoA), an essential intermediate at the junction of anabolic and catabolic pathways. AcsA undergoes a two-step reaction. In the first half reaction, AcsA combines acetate with ATP to form acetyl-adenylate (AcAMP) intermediate. In the second half reaction, it can then transfer the acetyl group from AcAMP to the sulfhydryl group of CoA, forming the product AcCoA. The sequence is that of Acetyl-coenzyme A synthetase from Brucella melitensis biotype 1 (strain ATCC 23456 / CCUG 17765 / NCTC 10094 / 16M).